A 176-amino-acid polypeptide reads, in one-letter code: Peptide methionine sulfoxide reductase MsrA (176 aa).

Cysteine 14 is an active-site residue.

This sequence belongs to the MsrA Met sulfoxide reductase family.

It catalyses the reaction L-methionyl-[protein] + [thioredoxin]-disulfide + H2O = L-methionyl-(S)-S-oxide-[protein] + [thioredoxin]-dithiol. The catalysed reaction is [thioredoxin]-disulfide + L-methionine + H2O = L-methionine (S)-S-oxide + [thioredoxin]-dithiol. Its function is as follows. Has an important function as a repair enzyme for proteins that have been inactivated by oxidation. Catalyzes the reversible oxidation-reduction of methionine sulfoxide in proteins to methionine. This is Peptide methionine sulfoxide reductase MsrA from Halalkalibacterium halodurans (strain ATCC BAA-125 / DSM 18197 / FERM 7344 / JCM 9153 / C-125) (Bacillus halodurans).